Consider the following 2551-residue polypeptide: Probable polyketide synthase 13 (2551 aa).

One can recognise a Ketosynthase family 3 (KS3) domain in the interval 10 to 434 (ENDVAIIGIG…GSNCCLILSQ (425 aa)). Active-site for beta-ketoacyl synthase activity residues include C176, H317, and H358. Positions 621–654 (GIEVSFIIGHSLGEIPAAYCSGMINIDTLCYLIY) are acyl/malonyl transferase. S631 serves as the catalytic For acyl/malonyl transferase activity. The interval 928–1057 (TDNLGYLNEN…GDFQLSNHSS (130 aa)) is N-terminal hotdog fold. One can recognise a PKS/mFAS DH domain in the interval 928 to 1226 (TDNLGYLNEN…CTSLTPIKES (299 aa)). Residue H961 is the Proton acceptor; for dehydratase activity of the active site. The tract at residues 1076–1226 (NLTKLSRDEL…CTSLTPIKES (151 aa)) is C-terminal hotdog fold. Residue D1136 is the Proton donor; for dehydratase activity of the active site. The region spanning 2465–2542 (DCQTIIKDSF…SSIQYTINSF (78 aa)) is the Carrier domain. At S2502 the chain carries O-(pantetheine 4'-phosphoryl)serine.

It depends on pantetheine 4'-phosphate as a cofactor.

In terms of biological role, probable polyketide synthase. The polypeptide is Probable polyketide synthase 13 (pks13) (Dictyostelium discoideum (Social amoeba)).